A 642-amino-acid polypeptide reads, in one-letter code: Frizzled and smoothened-like protein B (642 aa).

Positions 1-26 (MFNKNNNNNKIIIILKLFLIILIVNN) are cleaved as a signal peptide. The Extracellular portion of the chain corresponds to 27–264 (NNNIKTFGLN…KWHQMYNMSK (238 aa)). The region spanning 47 to 197 (DPTATCSNYI…GFFPVPCSDP (151 aa)) is the FZ domain. 3 disulfides stabilise this stretch: cysteine 52–cysteine 123, cysteine 65–cysteine 116, and cysteine 143–cysteine 194. N-linked (GlcNAc...) asparagine glycosylation is found at asparagine 80, asparagine 153, asparagine 162, asparagine 177, asparagine 203, asparagine 222, and asparagine 261. The chain crosses the membrane as a helical span at residues 265–285 (ILSTISFVCSIYNVLTFGILN). At 286 to 294 (HRRSKYNYC) the chain is on the cytoplasmic side. Residues 295-315 (ITFFSASVIIITMMDIVTYGI) form a helical membrane-spanning segment. Residues 316–344 (GYEKLLCPEPGRFAVQSDVSCGATGALFH) lie on the Extracellular side of the membrane. The chain crosses the membrane as a helical span at residues 345–365 (IGITNGVFWWTTMSICLFAVV). Residues 366 to 375 (KRIKLFDFRY) lie on the Cytoplasmic side of the membrane. Residues 376–398 (FIIFNTTASLISVIIPLAGNAFM) form a helical membrane-spanning segment. Residues 399-416 (AGTGSLACWIRKTWYVNS) lie on the Extracellular side of the membrane. The chain crosses the membrane as a helical span at residues 417-437 (VFWIPCGIALTIGSVCIILVI). Over 438–460 (YEIYKITKNVSTKDNRMILLQIK) the chain is Cytoplasmic. A helical membrane pass occupies residues 461–481 (PFLCVTLVGGSFYYLFIFNFD). N-linked (GlcNAc...) asparagine glycosylation occurs at asparagine 482. Over 482–514 (NESHSKEYKEKVVDYVMCLLSDTGKECLMAGPN) the chain is Extracellular. The chain crosses the membrane as a helical span at residues 515-535 (YVAYFVFYFFIRLFGITFFCI). The Cytoplasmic segment spans residues 536–642 (YGTSQNARDI…INSASNTSSD (107 aa)). The tract at residues 578-642 (GTNPTSNSKN…INSASNTSSD (65 aa)) is disordered. The segment covering 583–598 (SNSKNSKNNQNNQNNN) has biased composition (low complexity). The stretch at 584–611 (NSKNSKNNQNNQNNNSRKEFESKNIELE) forms a coiled coil. Positions 599-609 (SRKEFESKNIE) are enriched in basic and acidic residues. 2 stretches are compositionally biased toward polar residues: residues 614-623 (ESISKGQTTR) and 632-642 (NINSASNTSSD).

Belongs to the G-protein coupled receptor Fz/Smo family.

The protein localises to the membrane. This Dictyostelium discoideum (Social amoeba) protein is Frizzled and smoothened-like protein B (fslB).